A 376-amino-acid chain; its full sequence is Chaperone protein DnaJ (376 aa).

In terms of domain architecture, J spans 5–70 (DYYEVLGAAK…QKRAAYDQFG (66 aa)). The CR-type zinc finger occupies 134–212 (GCDEKIRIPT…CGGQGRVQNT (79 aa)). Zn(2+)-binding residues include Cys-147, Cys-150, Cys-164, Cys-167, Cys-186, Cys-189, Cys-200, and Cys-203. CXXCXGXG motif repeat units lie at residues 147 to 154 (CDVCHGSG), 164 to 171 (CTTCGGVG), 186 to 193 (CPTCKGEG), and 200 to 207 (CGNCGGQG).

The protein belongs to the DnaJ family. Homodimer. Zn(2+) serves as cofactor.

It localises to the cytoplasm. Participates actively in the response to hyperosmotic and heat shock by preventing the aggregation of stress-denatured proteins and by disaggregating proteins, also in an autonomous, DnaK-independent fashion. Unfolded proteins bind initially to DnaJ; upon interaction with the DnaJ-bound protein, DnaK hydrolyzes its bound ATP, resulting in the formation of a stable complex. GrpE releases ADP from DnaK; ATP binding to DnaK triggers the release of the substrate protein, thus completing the reaction cycle. Several rounds of ATP-dependent interactions between DnaJ, DnaK and GrpE are required for fully efficient folding. Also involved, together with DnaK and GrpE, in the DNA replication of plasmids through activation of initiation proteins. The sequence is that of Chaperone protein DnaJ from Alcanivorax borkumensis (strain ATCC 700651 / DSM 11573 / NCIMB 13689 / SK2).